A 263-amino-acid polypeptide reads, in one-letter code: Very long chain fatty acid elongase F (263 aa).

Helical transmembrane passes span I10–V30, I55–L75, L98–V118, F135–F155, L159–I179, I193–A213, and L223–Y243.

This sequence belongs to the ELO family. In terms of tissue distribution, no expression in adults.

It localises to the endoplasmic reticulum membrane. The catalysed reaction is a very-long-chain acyl-CoA + malonyl-CoA + H(+) = a very-long-chain 3-oxoacyl-CoA + CO2 + CoA. Condensing enzyme that elongates saturated and monounsaturated very long chain fatty acids, to yield products up to 30 carbons in length. The sequence is that of Very long chain fatty acid elongase F from Drosophila simulans (Fruit fly).